A 545-amino-acid polypeptide reads, in one-letter code: Hydroxylamine reductase (545 aa).

4 residues coordinate [4Fe-4S] cluster: Cys3, Cys6, Cys15, and Cys21. Residues His241, Glu265, Cys309, Cys396, Cys424, Cys449, Glu483, and Lys485 each coordinate hybrid [4Fe-2O-2S] cluster. Cys396 carries the post-translational modification Cysteine persulfide.

It belongs to the HCP family. [4Fe-4S] cluster serves as cofactor. The cofactor is hybrid [4Fe-2O-2S] cluster.

It localises to the cytoplasm. It carries out the reaction A + NH4(+) + H2O = hydroxylamine + AH2 + H(+). Functionally, catalyzes the reduction of hydroxylamine to form NH(3) and H(2)O. The sequence is that of Hydroxylamine reductase from Zymomonas mobilis subsp. mobilis (strain ATCC 31821 / ZM4 / CP4).